Here is a 322-residue protein sequence, read N- to C-terminus: Adenine deaminase (322 aa).

Positions 11, 13, and 189 each coordinate Zn(2+). Residue Glu192 is the Proton donor of the active site. Asp270 is a binding site for Zn(2+). Asp271 is a binding site for substrate.

It belongs to the metallo-dependent hydrolases superfamily. Adenosine and AMP deaminases family. Adenine deaminase type 2 subfamily. It depends on Zn(2+) as a cofactor.

It carries out the reaction adenine + H2O + H(+) = hypoxanthine + NH4(+). Catalyzes the hydrolytic deamination of adenine to hypoxanthine. Plays an important role in the purine salvage pathway and in nitrogen catabolism. This chain is Adenine deaminase, found in Rhizobium rhizogenes (strain K84 / ATCC BAA-868) (Agrobacterium radiobacter).